Consider the following 164-residue polypeptide: Phosphopantetheine adenylyltransferase (164 aa).

A substrate-binding site is contributed by T9. ATP is bound by residues 9-10 (TF) and H17. The substrate site is built by K41, L73, and R87. ATP is bound by residues 88-90 (GLR), E98, and 123-129 (YMFISAT).

The protein belongs to the bacterial CoaD family. As to quaternary structure, homohexamer. It depends on Mg(2+) as a cofactor.

It is found in the cytoplasm. It carries out the reaction (R)-4'-phosphopantetheine + ATP + H(+) = 3'-dephospho-CoA + diphosphate. The protein operates within cofactor biosynthesis; coenzyme A biosynthesis; CoA from (R)-pantothenate: step 4/5. Functionally, reversibly transfers an adenylyl group from ATP to 4'-phosphopantetheine, yielding dephospho-CoA (dPCoA) and pyrophosphate. This Nitrosomonas eutropha (strain DSM 101675 / C91 / Nm57) protein is Phosphopantetheine adenylyltransferase.